The following is a 336-amino-acid chain: Glyceraldehyde-3-phosphate dehydrogenase 1 (336 aa).

NAD(+)-binding positions include 12–13 (RI), Asp34, and Ser120. D-glyceraldehyde 3-phosphate is bound by residues 150 to 152 (SCT), Thr181, Arg198, 211 to 212 (TG), and Arg234. Cys151 (nucleophile) is an active-site residue. Asn316 is a binding site for NAD(+).

This sequence belongs to the glyceraldehyde-3-phosphate dehydrogenase family. Homotetramer.

Its subcellular location is the cytoplasm. It catalyses the reaction D-glyceraldehyde 3-phosphate + phosphate + NAD(+) = (2R)-3-phospho-glyceroyl phosphate + NADH + H(+). The protein operates within carbohydrate degradation; glycolysis; pyruvate from D-glyceraldehyde 3-phosphate: step 1/5. In terms of biological role, catalyzes the oxidative phosphorylation of glyceraldehyde 3-phosphate (G3P) to 1,3-bisphosphoglycerate (BPG) using the cofactor NAD. The first reaction step involves the formation of a hemiacetal intermediate between G3P and a cysteine residue, and this hemiacetal intermediate is then oxidized to a thioester, with concomitant reduction of NAD to NADH. The reduced NADH is then exchanged with the second NAD, and the thioester is attacked by a nucleophilic inorganic phosphate to produce BPG. This chain is Glyceraldehyde-3-phosphate dehydrogenase 1 (gapA1), found in Staphylococcus epidermidis (strain ATCC 35984 / DSM 28319 / BCRC 17069 / CCUG 31568 / BM 3577 / RP62A).